Consider the following 594-residue polypeptide: Probable pectinesterase/pectinesterase inhibitor 33 (594 aa).

The N-terminal stretch at 1 to 22 (MLRGIFHICLLASFLLLPFSSA) is a signal peptide. The tract at residues 28-75 (FTGGTDAPPPWDHNVSPPPETAPSPTPTSSPSTTSPPSPGPVAAPSPI) is disordered. The segment covering 34 to 71 (APPPWDHNVSPPPETAPSPTPTSSPSTTSPPSPGPVAA) has biased composition (pro residues). N-linked (GlcNAc...) asparagine glycans are attached at residues Asn-77, Asn-170, Asn-213, and Asn-226. Residues 78–237 (GSVSGDMTWW…SDLIGNCLAV (160 aa)) form a pectinesterase inhibitor 33 region. The interval 280 to 581 (HLVVAQDRSG…TVGSLIAGGS (302 aa)) is pectinesterase 33. Residues Thr-356 and Gln-386 each contribute to the substrate site. The active-site Proton donor; for pectinesterase activity is the Asp-409. Cys-423 and Cys-443 are disulfide-bonded. Asp-430 acts as the Nucleophile; for pectinesterase activity in catalysis. Substrate is bound by residues Arg-498 and Trp-500.

This sequence in the N-terminal section; belongs to the PMEI family. It in the C-terminal section; belongs to the pectinesterase family. Expressed in siliques.

The protein resides in the secreted. It is found in the cell wall. It carries out the reaction [(1-&gt;4)-alpha-D-galacturonosyl methyl ester](n) + n H2O = [(1-&gt;4)-alpha-D-galacturonosyl](n) + n methanol + n H(+). It functions in the pathway glycan metabolism; pectin degradation; 2-dehydro-3-deoxy-D-gluconate from pectin: step 1/5. In terms of biological role, acts in the modification of cell walls via demethylesterification of cell wall pectin. In Arabidopsis thaliana (Mouse-ear cress), this protein is Probable pectinesterase/pectinesterase inhibitor 33 (PME33).